A 314-amino-acid polypeptide reads, in one-letter code: Vacuolar membrane protein EC1118_1N9_3125g (314 aa).

Residues 32-60 (KPTSSVVSETSSKSLPSLTSSAFSTSSGA) form a disordered region. A helical transmembrane segment spans residues 93–113 (VYIAVGAVIGAIFISILIWWL). Phosphoserine occurs at positions 148, 254, and 274. The disordered stretch occupies residues 240 to 309 (EERKLNLNRP…PSMFLDDVLN (70 aa)). Residues 254 to 269 (SPERKEKKINSMEGYH) show a composition bias toward basic and acidic residues.

Belongs to the PRM5 family.

It localises to the vacuole membrane. The protein is Vacuolar membrane protein EC1118_1N9_3125g of Saccharomyces cerevisiae (strain Lalvin EC1118 / Prise de mousse) (Baker's yeast).